Consider the following 76-residue polypeptide: Exodeoxyribonuclease 7 small subunit (76 aa).

This sequence belongs to the XseB family. In terms of assembly, heterooligomer composed of large and small subunits.

Its subcellular location is the cytoplasm. It carries out the reaction Exonucleolytic cleavage in either 5'- to 3'- or 3'- to 5'-direction to yield nucleoside 5'-phosphates.. In terms of biological role, bidirectionally degrades single-stranded DNA into large acid-insoluble oligonucleotides, which are then degraded further into small acid-soluble oligonucleotides. The sequence is that of Exodeoxyribonuclease 7 small subunit from Arthrobacter sp. (strain FB24).